The chain runs to 984 residues: Mast/stem cell growth factor receptor Kit (984 aa).

An N-terminal signal peptide occupies residues 1-21 (MEYHWILLCVSLCFTFHPGDT). Residues 22-514 (KPTITPAGTY…RTISHDLFSP (493 aa)) are Extracellular-facing. 5 consecutive Ig-like C2-type domains span residues 23–97 (PTIT…ERAS), 98–197 (IYIY…LTVR), 203–300 (PPVI…VWLD), 311–395 (PVNN…ASVN), and 398–498 (FTIF…QAFT). Cystine bridges form between C44–C87, C129–C178, C144–C175, and C226–C284. N227, N260, N314, N351, N395, N448, and N476 each carry an N-linked (GlcNAc...) asparagine glycan. A disulfide bond links C421 and C487. A helical transmembrane segment spans residues 515–535 (LLIGSVSAACILCLILIVLFY). The Cytoplasmic segment spans residues 536–984 (KYMQKPKYQI…GTEPFRVQRV (449 aa)). Position 558 (Y558) interacts with Mg(2+). Y558 and Y560 each carry phosphotyrosine; by autocatalysis. Positions 579-926 (LRFGKTLGSG…LSDTTKHIYL (348 aa)) constitute a Protein kinase domain. ATP is bound by residues 586–593 (GSGAFGKV), K613, and 661–667 (EYCCFGD). Y690 and Y707 each carry phosphotyrosine; by autocatalysis. Low complexity predominate over residues 711–723 (RPSAAGKPSSSSS). Positions 711 to 749 (RPSAAGKPSSSSSSEKRRSLREGSPYVEEDSESEMFDED) are disordered. Over residues 737-749 (VEEDSESEMFDED) the composition is skewed to acidic residues. Residue D781 is the Proton acceptor of the active site. ATP is bound at residue R785. 2 residues coordinate Mg(2+): N786 and D799. 2 positions are modified to phosphotyrosine; by autocatalysis: Y812 and Y925. The interval 936-963 (PRGREESSTHSMASQPFNSAGNNSPPSR) is disordered. The segment covering 944–960 (THSMASQPFNSAGNNSP) has biased composition (polar residues).

It belongs to the protein kinase superfamily. Tyr protein kinase family. CSF-1/PDGF receptor subfamily. In terms of processing, ubiquitinated. Rapidly ubiquitinated after autophosphorylation induced by kitlg/scf binding, leading to internalization and degradation. Autophosphorylated on tyrosine residues. Phosphorylated tyrosine residues are important for interaction with specific binding partners.

It is found in the cell membrane. It catalyses the reaction L-tyrosyl-[protein] + ATP = O-phospho-L-tyrosyl-[protein] + ADP + H(+). Functionally, tyrosine-protein kinase that acts as a cell-surface receptor for the cytokine kitlg/scf and plays an essential role in the regulation of cell survival and proliferation, hematopoiesis, stem cell maintenance, gametogenesis, mast cell development, migration and function, and in melanogenesis. This Takifugu rubripes (Japanese pufferfish) protein is Mast/stem cell growth factor receptor Kit (kit).